A 325-amino-acid chain; its full sequence is Aldose 1-epimerase (325 aa).

A substrate-binding site is contributed by 73–74 (NR). His177 functions as the Proton donor in the catalytic mechanism. A substrate-binding site is contributed by Asp230. The active-site Proton acceptor is the Glu283.

The protein belongs to the aldose epimerase family.

The catalysed reaction is alpha-D-glucose = beta-D-glucose. It functions in the pathway carbohydrate metabolism; hexose metabolism. The sequence is that of Aldose 1-epimerase (galM) from Bacillus subtilis (strain 168).